An 85-amino-acid chain; its full sequence is Phosphoribosyl-AMP cyclohydrolase (85 aa).

A Mg(2+)-binding site is contributed by D48. Zn(2+) is bound at residue C49. Residues D50 and D52 each contribute to the Mg(2+) site. Zn(2+) is bound by residues C65 and C72.

The protein belongs to the PRA-CH family. Homodimer. The cofactor is Mg(2+). Zn(2+) is required as a cofactor.

It localises to the cytoplasm. The catalysed reaction is 1-(5-phospho-beta-D-ribosyl)-5'-AMP + H2O = 1-(5-phospho-beta-D-ribosyl)-5-[(5-phospho-beta-D-ribosylamino)methylideneamino]imidazole-4-carboxamide. The protein operates within amino-acid biosynthesis; L-histidine biosynthesis; L-histidine from 5-phospho-alpha-D-ribose 1-diphosphate: step 3/9. Catalyzes the hydrolysis of the adenine ring of phosphoribosyl-AMP. The protein is Phosphoribosyl-AMP cyclohydrolase (hisI) of Saccharolobus solfataricus (strain ATCC 35092 / DSM 1617 / JCM 11322 / P2) (Sulfolobus solfataricus).